Reading from the N-terminus, the 221-residue chain is Ras-related protein Rab-28 (221 aa).

At serine 2 the chain carries N-acetylserine. Serine 8 is modified (phosphoserine). Residues glycine 21, glycine 24, lysine 25, threonine 26, serine 27, glycine 38, lysine 39, tyrosine 41, and threonine 44 each contribute to the GTP site. Threonine 26 lines the Mg(2+) pocket. The segment at glutamate 35–phenylalanine 49 is switch I. Mg(2+) contacts are provided by threonine 44 and aspartate 68. The segment at aspartate 68–glycine 85 is switch II. GTP is bound by residues glycine 71, asparagine 129, lysine 130, aspartate 132, alanine 160, and lysine 161. Residue cysteine 218 is modified to Cysteine methyl ester. Cysteine 218 is lipidated: S-farnesyl cysteine. The propeptide at alanine 219–glutamine 221 is removed in mature form.

This sequence belongs to the small GTPase superfamily. Rab family. Interacts (prenylated form) with PDE6D; the interaction promotes RAB28 delivery to the photoreceptor outer segments. Interacts with KCNJ13; the interaction may facilitate cone outer segments phagocytosis. Interacts with RELA; the interaction contributes to RELA transport from cytoplasm to nucleus. The cofactor is Mg(2+). In terms of processing, isoprenylated.

The protein localises to the cell membrane. Its subcellular location is the cytoplasm. It localises to the cytoskeleton. The protein resides in the cilium basal body. It is found in the nucleus. The enzyme catalyses GTP + H2O = GDP + phosphate + H(+). Its activity is regulated as follows. Regulated by guanine nucleotide exchange factors (GEFs) which promote the exchange of bound GDP for free GTP. Regulated by GTPase activating proteins (GAPs) which increase the GTP hydrolysis activity. Inhibited by GDP dissociation inhibitors (GDIs). Its function is as follows. The small GTPases Rab are key regulators of intracellular membrane trafficking, from the formation of transport vesicles to their fusion with membranes. Rabs cycle between an inactive GDP-bound form and an active GTP-bound form that is able to recruit to membranes different sets of downstream effectors directly responsible for vesicle formation, movement, tethering and fusion. RAB28 is required for shedding and phagocytosis of cone cell outer segments (OS) discs in the retina. Also participates in nuclear factor kappa-B p65/RELA nuclear transport in endothelial cells. The protein is Ras-related protein Rab-28 (RAB28) of Bos taurus (Bovine).